A 374-amino-acid polypeptide reads, in one-letter code: Organelle RRM domain-containing protein 1, chloroplastic (374 aa).

The transit peptide at 1–54 (MEALIASTSFFVPISNSSSSHIINNRFFPSFYSPNLNFGTFRKTSLSSSHLVFS) directs the protein to the chloroplast. The span at 258-271 (KDYEGDSTQDSRDQ) shows a compositional bias: basic and acidic residues. The interval 258-279 (KDYEGDSTQDSRDQDDSESPPV) is disordered. The RRM domain maps to 282–360 (KKLFITGLSF…WMIVVDVAKT (79 aa)).

As to quaternary structure, interacts with PCMP-H51/CRR28 and PCMP-H12/OTP82. Interacts with MORF8/RIP1, MORF2/RIP2 and VAR3/OZ1.

It localises to the plastid. Its subcellular location is the chloroplast. In terms of biological role, involved in C-to-U editing of chloroplastic RNA. Functions as major chloroplastic editing factor. Controls 62 percent of the chloroplastic editing sites. Binds RNA close to ORRM1-dependent editing sites in vitro. Binds the editing recognition trans-factors PCMP-H51/CRR28 and PCMP-H12/OTP82. The sequence is that of Organelle RRM domain-containing protein 1, chloroplastic from Arabidopsis thaliana (Mouse-ear cress).